The primary structure comprises 417 residues: Gamma-glutamyl phosphate reductase (417 aa).

It belongs to the gamma-glutamyl phosphate reductase family.

It localises to the cytoplasm. It carries out the reaction L-glutamate 5-semialdehyde + phosphate + NADP(+) = L-glutamyl 5-phosphate + NADPH + H(+). It functions in the pathway amino-acid biosynthesis; L-proline biosynthesis; L-glutamate 5-semialdehyde from L-glutamate: step 2/2. Its function is as follows. Catalyzes the NADPH-dependent reduction of L-glutamate 5-phosphate into L-glutamate 5-semialdehyde and phosphate. The product spontaneously undergoes cyclization to form 1-pyrroline-5-carboxylate. The chain is Gamma-glutamyl phosphate reductase from Haemophilus influenzae (strain PittEE).